Reading from the N-terminus, the 230-residue chain is Demethylmenaquinone methyltransferase (230 aa).

Residues Thr-62, Asp-80, 100–101 (DG), and Ser-117 each bind S-adenosyl-L-methionine.

This sequence belongs to the class I-like SAM-binding methyltransferase superfamily. MenG/UbiE family.

It catalyses the reaction a 2-demethylmenaquinol + S-adenosyl-L-methionine = a menaquinol + S-adenosyl-L-homocysteine + H(+). The protein operates within quinol/quinone metabolism; menaquinone biosynthesis; menaquinol from 1,4-dihydroxy-2-naphthoate: step 2/2. Its function is as follows. Methyltransferase required for the conversion of demethylmenaquinol (DMKH2) to menaquinol (MKH2). The polypeptide is Demethylmenaquinone methyltransferase (Corynebacterium efficiens (strain DSM 44549 / YS-314 / AJ 12310 / JCM 11189 / NBRC 100395)).